The following is a 303-amino-acid chain: UDP-N-acetylenolpyruvoylglucosamine reductase (303 aa).

In terms of domain architecture, FAD-binding PCMH-type spans 28-195; the sequence is KTGGPAQYLA…ISATFGLEPG (168 aa). The active site involves Arg-174. Ser-224 functions as the Proton donor in the catalytic mechanism. Residue Glu-294 is part of the active site.

The protein belongs to the MurB family. Requires FAD as cofactor.

It is found in the cytoplasm. It catalyses the reaction UDP-N-acetyl-alpha-D-muramate + NADP(+) = UDP-N-acetyl-3-O-(1-carboxyvinyl)-alpha-D-glucosamine + NADPH + H(+). It functions in the pathway cell wall biogenesis; peptidoglycan biosynthesis. Functionally, cell wall formation. The chain is UDP-N-acetylenolpyruvoylglucosamine reductase from Lactobacillus gasseri (strain ATCC 33323 / DSM 20243 / BCRC 14619 / CIP 102991 / JCM 1131 / KCTC 3163 / NCIMB 11718 / NCTC 13722 / AM63).